The sequence spans 1432 residues: DNA-directed RNA polymerase subunit beta (1432 aa).

This sequence belongs to the RNA polymerase beta chain family. As to quaternary structure, the RNAP catalytic core consists of 2 alpha, 1 beta, 1 beta' and 1 omega subunit. When a sigma factor is associated with the core the holoenzyme is formed, which can initiate transcription.

The catalysed reaction is RNA(n) + a ribonucleoside 5'-triphosphate = RNA(n+1) + diphosphate. DNA-dependent RNA polymerase catalyzes the transcription of DNA into RNA using the four ribonucleoside triphosphates as substrates. The sequence is that of DNA-directed RNA polymerase subunit beta from Solibacter usitatus (strain Ellin6076).